A 73-amino-acid chain; its full sequence is Translation initiation factor IF-1 (73 aa).

The S1-like domain occupies 1–72; sequence MAKDEIIEFE…SKGRITYRGK (72 aa).

Belongs to the IF-1 family. In terms of assembly, component of the 30S ribosomal translation pre-initiation complex which assembles on the 30S ribosome in the order IF-2 and IF-3, IF-1 and N-formylmethionyl-tRNA(fMet); mRNA recruitment can occur at any time during PIC assembly.

The protein resides in the cytoplasm. Its function is as follows. One of the essential components for the initiation of protein synthesis. Stabilizes the binding of IF-2 and IF-3 on the 30S subunit to which N-formylmethionyl-tRNA(fMet) subsequently binds. Helps modulate mRNA selection, yielding the 30S pre-initiation complex (PIC). Upon addition of the 50S ribosomal subunit IF-1, IF-2 and IF-3 are released leaving the mature 70S translation initiation complex. The sequence is that of Translation initiation factor IF-1 from Psychrobacter arcticus (strain DSM 17307 / VKM B-2377 / 273-4).